We begin with the raw amino-acid sequence, 182 residues long: MNVSKTEQDMRKAIEATAGNFATIRTGRASTSLLDRINVEYYGQPTPLKTLATITTPDASTVLIQPYDPSSLRLIEKTILESDLGLPPSNDGKTIRLNIPPLTAERRKDLVKVLRNLAEEGRVAVRNIRRHAIDEVRKEEKDAKVSEDEARRLQDEVQKLTDKSIQQIEKLFEAKEKEITTV.

It belongs to the RRF family.

It localises to the cytoplasm. Responsible for the release of ribosomes from messenger RNA at the termination of protein biosynthesis. May increase the efficiency of translation by recycling ribosomes from one round of translation to another. The chain is Ribosome-recycling factor from Gloeobacter violaceus (strain ATCC 29082 / PCC 7421).